We begin with the raw amino-acid sequence, 352 residues long: uncharacterized protein (352 aa).

To M.pneumoniae MPN_633 (in the N-terminal section), and M.pneumoniae MPN_634 (in the C-terminal section).

This is an uncharacterized protein from Mycoplasma pneumoniae (strain ATCC 29342 / M129 / Subtype 1) (Mycoplasmoides pneumoniae).